A 318-amino-acid chain; its full sequence is Ribose-phosphate pyrophosphokinase 2 (318 aa).

Residues aspartate 132, histidine 134, histidine 143, and aspartate 147 each contribute to the Mg(2+) site.

It belongs to the ribose-phosphate pyrophosphokinase family.

The protein localises to the cytoplasm. It carries out the reaction D-ribose 5-phosphate + ATP = 5-phospho-alpha-D-ribose 1-diphosphate + AMP + H(+). The protein operates within metabolic intermediate biosynthesis; 5-phospho-alpha-D-ribose 1-diphosphate biosynthesis; 5-phospho-alpha-D-ribose 1-diphosphate from D-ribose 5-phosphate (route I): step 1/1. In terms of biological role, 5-phosphoribose 1-diphosphate synthase involved in nucleotide, histidine, and tryptophan biosynthesis. Active in heteromultimeric complexes with other 5-phosphoribose 1-diphosphate synthases (PRS2, PRS3, PRS4 and PRS5). The sequence is that of Ribose-phosphate pyrophosphokinase 2 (PRS2) from Saccharomyces cerevisiae (strain ATCC 204508 / S288c) (Baker's yeast).